The sequence spans 518 residues: Nitrogenase iron-iron protein alpha chain (518 aa).

2 residues coordinate [8Fe-7S] cluster: C49 and C75. 2 residues coordinate [8Fe-9S-C-homocitryl] cluster: C257 and H423.

As to quaternary structure, hexamer of two alpha, two beta, and two delta chains. The cofactor is [8Fe-7S] cluster. It depends on [8Fe-9S-C-homocitryl] cluster as a cofactor.

The enzyme catalyses N2 + 8 reduced [2Fe-2S]-[ferredoxin] + 16 ATP + 16 H2O = H2 + 8 oxidized [2Fe-2S]-[ferredoxin] + 2 NH4(+) + 16 ADP + 16 phosphate + 6 H(+). Functionally, this iron-iron protein is part of the nitrogenase complex that catalyzes the key enzymatic reactions in nitrogen fixation. Other nitrogenase complexes utilize a molybdenum-iron protein or a vanadium-iron protein. This Ruminiclostridium hungatei (Clostridium hungatei) protein is Nitrogenase iron-iron protein alpha chain (anfD).